Consider the following 365-residue polypeptide: tRNA(Met) cytidine acetate ligase (365 aa).

Residues 7–20 (IAEF…HKYL), Gly96, Asn152, and Arg175 contribute to the ATP site.

This sequence belongs to the TmcAL family.

It is found in the cytoplasm. It carries out the reaction cytidine(34) in elongator tRNA(Met) + acetate + ATP = N(4)-acetylcytidine(34) in elongator tRNA(Met) + AMP + diphosphate. Functionally, catalyzes the formation of N(4)-acetylcytidine (ac(4)C) at the wobble position of elongator tRNA(Met), using acetate and ATP as substrates. First activates an acetate ion to form acetyladenylate (Ac-AMP) and then transfers the acetyl group to tRNA to form ac(4)C34. The chain is tRNA(Met) cytidine acetate ligase from Streptococcus pneumoniae (strain 70585).